We begin with the raw amino-acid sequence, 277 residues long: Large ribosomal subunit protein uL2 (277 aa).

2 disordered regions span residues 32–58 and 225–277; these read KSLT…RGGG and VAMN…RRNK. Residues 258-277 are compositionally biased toward basic residues; it reads YKTRKKKRYSDKFIIKRRNK.

The protein belongs to the universal ribosomal protein uL2 family. As to quaternary structure, part of the 50S ribosomal subunit. Forms a bridge to the 30S subunit in the 70S ribosome.

Its function is as follows. One of the primary rRNA binding proteins. Required for association of the 30S and 50S subunits to form the 70S ribosome, for tRNA binding and peptide bond formation. It has been suggested to have peptidyltransferase activity; this is somewhat controversial. Makes several contacts with the 16S rRNA in the 70S ribosome. This Borreliella afzelii (strain PKo) (Borrelia afzelii) protein is Large ribosomal subunit protein uL2.